A 187-amino-acid polypeptide reads, in one-letter code: Large ribosomal subunit protein uL22B (187 aa).

The protein belongs to the universal ribosomal protein uL22 family. In terms of assembly, component of the large ribosomal subunit (LSU). Mature yeast ribosomes consist of a small (40S) and a large (60S) subunit. The 40S small subunit contains 1 molecule of ribosomal RNA (18S rRNA) and at least 33 different proteins. The large 60S subunit contains 3 rRNA molecules (25S, 5.8S and 5S rRNA) and at least 46 different proteins. uL22 is associated with the polypeptide exit tunnel.

The protein localises to the cytoplasm. Its function is as follows. Component of the ribosome, a large ribonucleoprotein complex responsible for the synthesis of proteins in the cell. The small ribosomal subunit (SSU) binds messenger RNAs (mRNAs) and translates the encoded message by selecting cognate aminoacyl-transfer RNA (tRNA) molecules. The large subunit (LSU) contains the ribosomal catalytic site termed the peptidyl transferase center (PTC), which catalyzes the formation of peptide bonds, thereby polymerizing the amino acids delivered by tRNAs into a polypeptide chain. The nascent polypeptides leave the ribosome through a tunnel in the LSU and interact with protein factors that function in enzymatic processing, targeting, and the membrane insertion of nascent chains at the exit of the ribosomal tunnel. The sequence is that of Large ribosomal subunit protein uL22B (rpl1702) from Schizosaccharomyces pombe (strain 972 / ATCC 24843) (Fission yeast).